A 227-amino-acid chain; its full sequence is Eukaryotic translation initiation factor 4E-1 (227 aa).

A disordered region spans residues 1–52; sequence MAEEHETRPPSAGRPPSSGRGRADDADEREEGEIADDDSGHAPPQANPAAPH. Low complexity predominate over residues 9–20; sequence PPSAGRPPSSGR. Residues 25 to 37 are compositionally biased toward acidic residues; that stretch reads DADEREEGEIADD. EIF4G-binding regions lie at residues 52–55 and 62–98; these read HPLE and FDNP…NNIH. MRNA contacts are provided by residues 70-75, K102, and 120-121; these read KQATWG and WE. The cysteines at positions 125 and 163 are disulfide-linked. The interval 146–155 is EIF4G-binding; the sequence is HTLLAMIGEQ. Residues 170–175 and 215–219 contribute to the mRNA site; these read RGKQER and KKMDK.

The protein belongs to the eukaryotic initiation factor 4E family. In terms of assembly, EIF4F is a multi-subunit complex, the composition of which varies with external and internal environmental conditions. It is composed of at least EIF4A, EIF4E and EIF4G. EIF4E is also known to interact with other partners. In higher plants two isoforms of EIF4F have been identified, named isoform EIF4F and isoform EIF(iso)4F. Isoform EIF4F has subunits p220 and p26, whereas isoform EIF(iso)4F has subunits p82 and p28. In terms of processing, according to the redox status, the Cys-125-Cys-163 disulfide bridge may have a role in regulating protein function by affecting its ability to bind capped mRNA.

It is found in the nucleus. The protein localises to the cytoplasm. Component of the protein complex eIF4F, which is involved in the recognition of the mRNA cap, ATP-dependent unwinding of 5'-terminal secondary structure and recruitment of mRNA to the ribosome. Recognizes and binds the 7-methylguanosine-containing mRNA cap during an early step in the initiation of protein synthesis and facilitates ribosome binding by inducing the unwinding of the mRNAs secondary structures. This Oryza sativa subsp. japonica (Rice) protein is Eukaryotic translation initiation factor 4E-1.